A 347-amino-acid polypeptide reads, in one-letter code: 3,4-dihydroxy-2-butanone 4-phosphate synthase (347 aa).

Residues 1-200 are DHBP synthase; the sequence is MPLNRVREAI…ISDLIEYRMQ (200 aa). D-ribulose 5-phosphate is bound by residues 27-28, Asp32, 139-143, and Glu163; these read RE and RTGHT. Glu28 contacts Mg(2+). His142 provides a ligand contact to Mg(2+). A GTP cyclohydrolase II-like region spans residues 201-347; sequence NEMLILIKER…IVLQGGPIQL (147 aa).

In the N-terminal section; belongs to the DHBP synthase family. The protein in the C-terminal section; belongs to the GTP cyclohydrolase II family. It depends on Mg(2+) as a cofactor. Requires Mn(2+) as cofactor.

It catalyses the reaction D-ribulose 5-phosphate = (2S)-2-hydroxy-3-oxobutyl phosphate + formate + H(+). It participates in cofactor biosynthesis; riboflavin biosynthesis; 2-hydroxy-3-oxobutyl phosphate from D-ribulose 5-phosphate: step 1/1. Functionally, catalyzes the conversion of D-ribulose 5-phosphate to formate and 3,4-dihydroxy-2-butanone 4-phosphate. The chain is 3,4-dihydroxy-2-butanone 4-phosphate synthase (ribB) from Wolinella succinogenes (strain ATCC 29543 / DSM 1740 / CCUG 13145 / JCM 31913 / LMG 7466 / NCTC 11488 / FDC 602W) (Vibrio succinogenes).